The chain runs to 336 residues: Dihydroorotate dehydrogenase (quinone) (336 aa).

FMN is bound by residues 62–66 and Thr86; that span reads AGLDK. Lys66 lines the substrate pocket. 111-115 provides a ligand contact to substrate; sequence NRMGF. FMN contacts are provided by Asn139 and Asn172. Asn172 provides a ligand contact to substrate. Catalysis depends on Ser175, which acts as the Nucleophile. Substrate is bound at residue Asn177. Positions 217 and 245 each coordinate FMN. 246-247 is a binding site for substrate; sequence NT. Residues Gly268, Gly297, and 318–319 each bind FMN; that span reads YS.

This sequence belongs to the dihydroorotate dehydrogenase family. Type 2 subfamily. Monomer. Requires FMN as cofactor.

The protein resides in the cell membrane. The enzyme catalyses (S)-dihydroorotate + a quinone = orotate + a quinol. It participates in pyrimidine metabolism; UMP biosynthesis via de novo pathway; orotate from (S)-dihydroorotate (quinone route): step 1/1. Catalyzes the conversion of dihydroorotate to orotate with quinone as electron acceptor. The protein is Dihydroorotate dehydrogenase (quinone) of Cronobacter sakazakii (strain ATCC BAA-894) (Enterobacter sakazakii).